Here is a 384-residue protein sequence, read N- to C-terminus: S-adenosylmethionine synthase (384 aa).

ATP is bound at residue histidine 15. Aspartate 17 contributes to the Mg(2+) binding site. Glutamate 43 provides a ligand contact to K(+). Positions 56 and 99 each coordinate L-methionine. Residues 99-109 (QSPDINQGVDR) are flexible loop. ATP is bound by residues 164 to 166 (DAK), 231 to 232 (RF), aspartate 240, 246 to 247 (RK), alanine 263, and lysine 267. L-methionine is bound at residue aspartate 240. Lysine 271 lines the L-methionine pocket.

This sequence belongs to the AdoMet synthase family. Homotetramer; dimer of dimers. The cofactor is Mg(2+). K(+) serves as cofactor.

The protein localises to the cytoplasm. The enzyme catalyses L-methionine + ATP + H2O = S-adenosyl-L-methionine + phosphate + diphosphate. Its pathway is amino-acid biosynthesis; S-adenosyl-L-methionine biosynthesis; S-adenosyl-L-methionine from L-methionine: step 1/1. Its function is as follows. Catalyzes the formation of S-adenosylmethionine (AdoMet) from methionine and ATP. The overall synthetic reaction is composed of two sequential steps, AdoMet formation and the subsequent tripolyphosphate hydrolysis which occurs prior to release of AdoMet from the enzyme. The protein is S-adenosylmethionine synthase of Shewanella piezotolerans (strain WP3 / JCM 13877).